Reading from the N-terminus, the 367-residue chain is Glutamate 5-kinase (367 aa).

ATP is bound at residue Lys-10. Residues Ser-50, Asp-137, and Asn-149 each contribute to the substrate site. Residues 169 to 170 (TD) and 211 to 217 (TGGMSTK) contribute to the ATP site. Positions 275–353 (AGEITVDEGA…QQIDAILGYE (79 aa)) constitute a PUA domain.

This sequence belongs to the glutamate 5-kinase family.

The protein resides in the cytoplasm. The catalysed reaction is L-glutamate + ATP = L-glutamyl 5-phosphate + ADP. It participates in amino-acid biosynthesis; L-proline biosynthesis; L-glutamate 5-semialdehyde from L-glutamate: step 1/2. Functionally, catalyzes the transfer of a phosphate group to glutamate to form L-glutamate 5-phosphate. The chain is Glutamate 5-kinase from Salmonella paratyphi A (strain ATCC 9150 / SARB42).